A 366-amino-acid polypeptide reads, in one-letter code: Sulfate/thiosulfate import ATP-binding protein CysA 2 (366 aa).

Residues 14 to 243 form the ABC transporter domain; the sequence is LSVHALCRRF…PASRFVAEFV (230 aa). 46–53 contacts ATP; the sequence is GPSGCGKT.

The protein belongs to the ABC transporter superfamily. Sulfate/tungstate importer (TC 3.A.1.6) family. As to quaternary structure, the complex is composed of two ATP-binding proteins (CysA), two transmembrane proteins (CysT and CysW) and a solute-binding protein (CysP).

It localises to the cell inner membrane. It carries out the reaction sulfate(out) + ATP + H2O = sulfate(in) + ADP + phosphate + H(+). The enzyme catalyses thiosulfate(out) + ATP + H2O = thiosulfate(in) + ADP + phosphate + H(+). Part of the ABC transporter complex CysAWTP involved in sulfate/thiosulfate import. Responsible for energy coupling to the transport system. The sequence is that of Sulfate/thiosulfate import ATP-binding protein CysA 2 from Chromobacterium violaceum (strain ATCC 12472 / DSM 30191 / JCM 1249 / CCUG 213 / NBRC 12614 / NCIMB 9131 / NCTC 9757 / MK).